Here is a 128-residue protein sequence, read N- to C-terminus: Azurin (128 aa).

A Plastocyanin-like domain is found at 1-128; that stretch reads AECSVDIQGN…ALMKGTLTLK (128 aa). Cysteines 3 and 26 form a disulfide. Cu cation is bound by residues His46, Cys112, His117, and Met121.

Its subcellular location is the periplasm. Transfers electrons from cytochrome c551 to cytochrome oxidase. This chain is Azurin, found in Pseudomonas aeruginosa.